The primary structure comprises 120 residues: NAD(P)H-quinone oxidoreductase subunit 3, chloroplastic (120 aa).

The next 3 membrane-spanning stretches (helical) occupy residues 9–29 (IFWA…LISG), 64–84 (MFAL…PWAM), and 88–108 (VLGV…IVGS).

Belongs to the complex I subunit 3 family. As to quaternary structure, NDH is composed of at least 16 different subunits, 5 of which are encoded in the nucleus.

It is found in the plastid. It localises to the chloroplast thylakoid membrane. It carries out the reaction a plastoquinone + NADH + (n+1) H(+)(in) = a plastoquinol + NAD(+) + n H(+)(out). It catalyses the reaction a plastoquinone + NADPH + (n+1) H(+)(in) = a plastoquinol + NADP(+) + n H(+)(out). Functionally, NDH shuttles electrons from NAD(P)H:plastoquinone, via FMN and iron-sulfur (Fe-S) centers, to quinones in the photosynthetic chain and possibly in a chloroplast respiratory chain. The immediate electron acceptor for the enzyme in this species is believed to be plastoquinone. Couples the redox reaction to proton translocation, and thus conserves the redox energy in a proton gradient. In Carica papaya (Papaya), this protein is NAD(P)H-quinone oxidoreductase subunit 3, chloroplastic.